We begin with the raw amino-acid sequence, 383 residues long: Centractin (383 aa).

A disordered region spans residues 227–246 (PQKEEELLEPDSSSSKPVQP).

Belongs to the actin family. ARP1 subfamily.

It localises to the cytoplasm. Its subcellular location is the cytoskeleton. The protein resides in the microtubule organizing center. It is found in the centrosome. Component of a multi-subunit complex, PPK2 (poly P kinase complex 2) involved in microtubule based vesicle motility. It is associated with the centrosome. PPK2 complex can synthesize a poly chain of hundreds of phosphate residues linked by ATP-like bonds. This is Centractin (arpA) from Dictyostelium discoideum (Social amoeba).